Reading from the N-terminus, the 282-residue chain is Bifunctional protein FolD (282 aa).

Residues 165–167 (GRG), threonine 192, and valine 233 contribute to the NADP(+) site.

Belongs to the tetrahydrofolate dehydrogenase/cyclohydrolase family. Homodimer.

The catalysed reaction is (6R)-5,10-methylene-5,6,7,8-tetrahydrofolate + NADP(+) = (6R)-5,10-methenyltetrahydrofolate + NADPH. The enzyme catalyses (6R)-5,10-methenyltetrahydrofolate + H2O = (6R)-10-formyltetrahydrofolate + H(+). It functions in the pathway one-carbon metabolism; tetrahydrofolate interconversion. In terms of biological role, catalyzes the oxidation of 5,10-methylenetetrahydrofolate to 5,10-methenyltetrahydrofolate and then the hydrolysis of 5,10-methenyltetrahydrofolate to 10-formyltetrahydrofolate. The protein is Bifunctional protein FolD of Mycobacterium leprae (strain Br4923).